Consider the following 258-residue polypeptide: Venom plasminogen activator TSV-PA (258 aa).

The signal sequence occupies residues 1 to 18 (MELIRVLANLLILQLSYA). A propeptide spanning residues 19–24 (QKSSEL) is cleaved from the precursor. The region spanning 25–249 (VFGGDECNIN…YLDWIKSIIA (225 aa)) is the Peptidase S1 domain. Cystine bridges form between C31/C163, C50/C66, C98/C256, C142/C210, C174/C189, and C200/C225. Catalysis depends on charge relay system residues H65 and D110. N-linked (GlcNAc...) asparagine glycosylation is present at N185. Residue S204 is the Charge relay system of the active site.

This sequence belongs to the peptidase S1 family. Snake venom subfamily. In terms of assembly, monomer. Expressed by the venom gland.

It is found in the secreted. Its function is as follows. Snake venom serine protease that activates plasminogen. The sequence is that of Venom plasminogen activator TSV-PA from Trimeresurus stejnegeri (Chinese green tree viper).